Here is a 117-residue protein sequence, read N- to C-terminus: Biogenesis of lysosome-related organelles complex 1 subunit BLS1 (117 aa).

Positions 97–117 are disordered; sequence EGKAQDTEQAPGKGDRIFRSD.

The protein belongs to the BLOC1S1 family. In terms of assembly, component of the biogenesis of lysosome-related organelles complex-1 (BLOC-1).

Its subcellular location is the endosome. Component of the biogenesis of lysosome-related organelles complex-1 (BLOC-1), a complex involved in endosomal cargo sorting. This is Biogenesis of lysosome-related organelles complex 1 subunit BLS1 (BLS1) from Eremothecium gossypii (strain ATCC 10895 / CBS 109.51 / FGSC 9923 / NRRL Y-1056) (Yeast).